We begin with the raw amino-acid sequence, 1302 residues long: MALKEKEFGHYAKRIDYTKVSGNLDLPNLIEIQTETYDWFKKTGISEVFREVFPIVGHEGNIVLEMLDWEFREPRRTISQAKDESKIFEAPIYSNLKLTINSKDVEVEKAIVKGEPELIKAWIEERVGHMITILKKTTDVIYYDIHSGDEIATCTVTIKERLDDKLIVDITIEKEGEVFFGDFPLMTGKGTFIVNGSEKVVVSQLVRSPGAYYKIDLNRKNGENVYYVDLIPSRGTWLEFESDHKKIKVGKEEKFENVFYVKIDKSRKVSVANFLTALGIIKEDALDIFGDNKLVKSTYELDPYTGDILYDQSIAVQEIYKKIRSGETATPDGATKYLYGLLFDKRKYDLTKAGRFKLIQKLSVENRIYNKILAEDIKDVNGKVVFTEGTLMDKEAINKLKGILKAGACLQEVKFSDEIICSNKIQKIKVYVDNEVRSRVANIIGIDPNATDEYVTVPDVLATFSYLLNLTDGIGEVDDIDHLGNRRVRTIGELLQNQFRIGLLRIEKNVKEKMSTSNLFKMKPSNIINNKPLSAIIGEFFNLSQLSQFMDQTNPLAELTNKRRLTALGPGGLSRERAGLEVRDVHYSHYGRICPIETPEGPNIGLINNLATYAKINSYGFIETPYRRVIGCKVTMENDYLTADEEKNYVVAQANIRLSDKGEILDEQVVARFQGENIIAGRNDVDYVDVSPKQIVSIATSCIPFLENDDANRALMGANMQRQAIPLIAPNSPYVGTGVEYAAARDSGLAIVSQYDGIVDFVDATRIVLKTKEGLKNYNLDTFVRSNQGTSLTHVPLVRQGQKVEKGQVLADGPSIDKGELALGQNVVVAFTTWNGYNYEDAIIVSERLVSEDVFTSIHIEEYTIERRQTKQGPEEITREIPNISENARKFLDDDGLVIIGTEVKPGDILVGKVTPKGQTQLSPEDKLLQAIFGEKSKNVKDNSLRVPNGGEGIIQAIKRFPREKYEVSADVLEVIKIYIVQKRKIQEGDKMAGRHGNKGVISKILPLEDMPHMEDGTPVDIMLNPLGVPSRMNIGQVLEIHLGMAAKKLGQKISTPVFDGMINEELIEIMDKAGMKNFGKEVLIDGRTGEKFDNPVSVGVMYMLKLSHMVDDKLHARNVGPYSLITQQPLGGKAQNGGQRFGEMEVWALEAYGAAHTLREILTIKSDDIKGRTRAYESIVKDKKIPEPGIPESFNVLTREIQGLGFNIHMIDEKGNIKNIKSYDEADYVDEDLLTDCDEFEDEFDIDNFILSTNREPQKKEHLEDFVKVEDSFDLVDNLDDNELDDIDNEIDEINDQDELS.

This sequence belongs to the RNA polymerase beta chain family. The RNAP catalytic core consists of 2 alpha, 1 beta, 1 beta' and 1 omega subunit. When a sigma factor is associated with the core the holoenzyme is formed, which can initiate transcription.

The catalysed reaction is RNA(n) + a ribonucleoside 5'-triphosphate = RNA(n+1) + diphosphate. Its function is as follows. DNA-dependent RNA polymerase catalyzes the transcription of DNA into RNA using the four ribonucleoside triphosphates as substrates. This Spiroplasma citri protein is DNA-directed RNA polymerase subunit beta.